The following is a 257-amino-acid chain: uncharacterized protein (257 aa).

Helical transmembrane passes span 23–43 (VLTDPVSWGLIGSLVVLEGLL), 79–99 (FIFIGLGMLLIKFWWIKVLGA), 131–151 (TFGIFWATVISVELMDLAFSV), 158–178 (FAVSEKVWVLLIGGMLGILMM), 199–219 (AFVLIGIIALKMAGSAFHYEM), and 221–241 (HSVFFIIIIAAFAVTLIIHYI).

It belongs to the TerC family.

It is found in the cell membrane. This is an uncharacterized protein from Bacillus subtilis (strain 168).